A 362-amino-acid chain; its full sequence is Probable endopolygalacturonase B (362 aa).

The signal sequence occupies residues 1-20 (MHFLQNAFVAATMGAAPAAA). Residues 21-25 (TPLEK) constitute a propeptide that is removed on maturation. Residues cysteine 28 and cysteine 43 are joined by a disulfide bond. PbH1 repeat units follow at residues 155 to 184 (ADHLTITDVTIDDSAGTSKGHNTDAFDIGQ), 185 to 206 (STYITIDGATVYNQDDCLAINS), 207 to 227 (GEHITFTNGYCDGGHGLSIGS), 236 to 257 (VNDVTISNSKVVNSQNGVRIKT), 265 to 287 (VENVKFEDITLSDISKYGIVVEQ), and 299 to 344 (TNGV…DVTG). Aspartate 199 serves as the catalytic Proton donor. Cysteine 201 and cysteine 217 are joined by a disulfide. Residue histidine 221 is part of the active site. A disulfide bridge links cysteine 327 with cysteine 332. Asparagine 334 carries N-linked (GlcNAc...) asparagine glycosylation. Cysteine 351 and cysteine 360 are disulfide-bonded.

This sequence belongs to the glycosyl hydrolase 28 family.

It is found in the secreted. The enzyme catalyses (1,4-alpha-D-galacturonosyl)n+m + H2O = (1,4-alpha-D-galacturonosyl)n + (1,4-alpha-D-galacturonosyl)m.. In terms of biological role, involved in maceration and soft-rotting of plant tissue. Hydrolyzes the 1,4-alpha glycosidic bonds of de-esterified pectate in the smooth region of the plant cell wall. The sequence is that of Probable endopolygalacturonase B (pgaB) from Aspergillus kawachii (White koji mold).